The chain runs to 557 residues: Dihydroxy-acid dehydratase (557 aa).

Cysteine 47 is a [2Fe-2S] cluster binding site. Aspartate 79 is a Mg(2+) binding site. Cysteine 120 provides a ligand contact to [2Fe-2S] cluster. Mg(2+) contacts are provided by aspartate 121 and lysine 122. Lysine 122 carries the post-translational modification N6-carboxylysine. Cysteine 192 contacts [2Fe-2S] cluster. Position 444 (glutamate 444) interacts with Mg(2+). The Proton acceptor role is filled by serine 470.

This sequence belongs to the IlvD/Edd family. In terms of assembly, homodimer. The cofactor is [2Fe-2S] cluster. It depends on Mg(2+) as a cofactor.

The catalysed reaction is (2R)-2,3-dihydroxy-3-methylbutanoate = 3-methyl-2-oxobutanoate + H2O. It carries out the reaction (2R,3R)-2,3-dihydroxy-3-methylpentanoate = (S)-3-methyl-2-oxopentanoate + H2O. It participates in amino-acid biosynthesis; L-isoleucine biosynthesis; L-isoleucine from 2-oxobutanoate: step 3/4. Its pathway is amino-acid biosynthesis; L-valine biosynthesis; L-valine from pyruvate: step 3/4. Functionally, functions in the biosynthesis of branched-chain amino acids. Catalyzes the dehydration of (2R,3R)-2,3-dihydroxy-3-methylpentanoate (2,3-dihydroxy-3-methylvalerate) into 2-oxo-3-methylpentanoate (2-oxo-3-methylvalerate) and of (2R)-2,3-dihydroxy-3-methylbutanoate (2,3-dihydroxyisovalerate) into 2-oxo-3-methylbutanoate (2-oxoisovalerate), the penultimate precursor to L-isoleucine and L-valine, respectively. The chain is Dihydroxy-acid dehydratase from Synechococcus sp. (strain CC9902).